A 466-amino-acid chain; its full sequence is Neuropeptide Y receptor type 5 (466 aa).

Over 1–63 (MEVKLEEHFN…YRGSVDDLQY (63 aa)) the chain is Extracellular. N-linked (GlcNAc...) asparagine glycosylation is found at Asn-10, Asn-17, Asn-38, and Asn-39. The helical transmembrane segment at 64–84 (FLIGLYTFVSLLGFMGNLLIL) threads the bilayer. At 85 to 98 (MAVMKKRNQKTTVN) the chain is on the cytoplasmic side. The helical transmembrane segment at 99 to 119 (FLIGNLAFSDILVVLFCSPFT) threads the bilayer. Topologically, residues 120–138 (LTSVLLDQWMFGKAMCHIM) are extracellular. Cys-135 and Cys-219 are disulfide-bonded. The chain crosses the membrane as a helical span at residues 139–159 (PFLQCVSVLVSTLILISIAIV). Residues 160 to 177 (RYHMIKHPISNNLTANHG) lie on the Cytoplasmic side of the membrane. The chain crosses the membrane as a helical span at residues 178 to 198 (YFLIATVWTLGFAICSPLPVF). At 199 to 229 (HSLVELKETFGSALLSSKYLCVESWPSDSYR) the chain is on the extracellular side. The chain crosses the membrane as a helical span at residues 230–250 (IAFTISLLLVQYILPLVCLTV). Residues 251–389 (SHTSVCRSIS…KKRSRSVFYR (139 aa)) are Cytoplasmic-facing. A disordered region spans residues 323 to 346 (GPSQEKHLTVPENPGSVRSQLSPS). Residues 390 to 410 (LTILILVFAVSWMPLHVFHVV) traverse the membrane as a helical segment. Residues 411 to 427 (TDFNDNLISNRHFKLVY) are Extracellular-facing. A helical transmembrane segment spans residues 428–448 (CICHLLGMMSCCLNPILYGFL). Residues 449 to 466 (NNGIKADLRALIHCLHMS) lie on the Cytoplasmic side of the membrane. Cys-462 carries S-palmitoyl cysteine lipidation.

It belongs to the G-protein coupled receptor 1 family.

It is found in the cell membrane. In terms of biological role, receptor for neuropeptide Y and peptide YY. The activity of this receptor is mediated by G proteins that inhibit adenylate cyclase activity. Seems to be associated with food intake. Could be involved in feeding disorders. The sequence is that of Neuropeptide Y receptor type 5 (Npy5r) from Mus musculus (Mouse).